The primary structure comprises 84 residues: UPF0298 protein NWMN_0985 (84 aa).

It belongs to the UPF0298 family.

The protein resides in the cytoplasm. This is UPF0298 protein NWMN_0985 from Staphylococcus aureus (strain Newman).